The following is a 501-amino-acid chain: Glycerol kinase (501 aa).

Thr-16 is an ADP binding site. ATP-binding residues include Thr-16, Thr-17, and Ser-18. Residue Thr-16 participates in sn-glycerol 3-phosphate binding. Arg-20 lines the ADP pocket. 4 residues coordinate sn-glycerol 3-phosphate: Arg-84, Glu-85, Tyr-135, and Asp-242. 5 residues coordinate glycerol: Arg-84, Glu-85, Tyr-135, Asp-242, and Gln-243. Residues Thr-264 and Gly-307 each contribute to the ADP site. ATP-binding residues include Thr-264, Gly-307, Gln-311, and Gly-408. ADP is bound at residue Gly-408.

The protein belongs to the FGGY kinase family.

It carries out the reaction glycerol + ATP = sn-glycerol 3-phosphate + ADP + H(+). It functions in the pathway polyol metabolism; glycerol degradation via glycerol kinase pathway; sn-glycerol 3-phosphate from glycerol: step 1/1. Its function is as follows. Key enzyme in the regulation of glycerol uptake and metabolism. Catalyzes the phosphorylation of glycerol to yield sn-glycerol 3-phosphate. The polypeptide is Glycerol kinase (Saccharolobus islandicus (strain M.14.25 / Kamchatka #1) (Sulfolobus islandicus)).